A 375-amino-acid chain; its full sequence is Alcohol dehydrogenase 1 (375 aa).

A1 carries the post-translational modification N-acetylalanine. C46, H68, C98, C101, C104, C112, and C175 together coordinate Zn(2+). NAD(+)-binding positions include 200–205, D224, K229, 293–295, and R370; these read GLGGVG and VGV.

This sequence belongs to the zinc-containing alcohol dehydrogenase family. Class-I subfamily. Homodimer. Zn(2+) serves as cofactor.

It is found in the cytoplasm. The enzyme catalyses a primary alcohol + NAD(+) = an aldehyde + NADH + H(+). The catalysed reaction is a secondary alcohol + NAD(+) = a ketone + NADH + H(+). This chain is Alcohol dehydrogenase 1, found in Columba livia (Rock dove).